The following is a 932-amino-acid chain: Calpain-like protease palB/cpr-8 (932 aa).

Residues 96–419 (KLHGNIFPPW…FDSLYVNWSP (324 aa)) form the Calpain catalytic domain. Residues Cys-178, His-346, and Asn-366 contribute to the active site. The tract at residues 890–932 (QGHVTEGSDDDGGGGGGGGGGVHVEISSDGVVSIGEWEVADED) is disordered. A compositionally biased stretch (gly residues) spans 902-911 (GGGGGGGGGV).

Belongs to the peptidase C2 family. PalB/RIM13 subfamily.

Its function is as follows. Required for the proteolytic cleavage of the transcription factor pacc-1 in response to alkaline ambient pH. This chain is Calpain-like protease palB/cpr-8 (cpr-8), found in Neurospora crassa (strain ATCC 24698 / 74-OR23-1A / CBS 708.71 / DSM 1257 / FGSC 987).